Here is a 469-residue protein sequence, read N- to C-terminus: Glutamate--tRNA ligase (469 aa).

Residues 8-18 carry the 'HIGH' region motif; it reads PSPTGFLHVGG. Zn(2+) contacts are provided by Cys-97, Cys-99, Cys-124, and Asp-126. Residues 236–240 carry the 'KMSKS' region motif; that stretch reads KLSKR. ATP is bound at residue Lys-239.

The protein belongs to the class-I aminoacyl-tRNA synthetase family. Glutamate--tRNA ligase type 1 subfamily. Monomer. Zn(2+) serves as cofactor.

The protein resides in the cytoplasm. It catalyses the reaction tRNA(Glu) + L-glutamate + ATP = L-glutamyl-tRNA(Glu) + AMP + diphosphate. Functionally, catalyzes the attachment of glutamate to tRNA(Glu) in a two-step reaction: glutamate is first activated by ATP to form Glu-AMP and then transferred to the acceptor end of tRNA(Glu). This is Glutamate--tRNA ligase from Francisella philomiragia subsp. philomiragia (strain ATCC 25017 / CCUG 19701 / FSC 153 / O#319-036).